The sequence spans 346 residues: 3-keto-steroid reductase ERG27 (346 aa).

NADP(+) is bound by residues L19, T42, and K48. Residues S182 and Y205 each act as proton donor in the active site. Positions 205, 209, and 241 each coordinate NADP(+). The active-site Lowers pKa of active site Tyr is K209. The chain crosses the membrane as a helical span at residues 242–262 (FSFFQYLNVFTYYGMLFLFYL). An N-linked (GlcNAc...) asparagine glycan is attached at N272.

Belongs to the short-chain dehydrogenases/reductases (SDR) family. ERG27 subfamily. Heterotetramer of ERG25, ERG26, ERG27 and ERG28. ERG28 acts as a scaffold to tether ERG27 and other 4,4-demethylation-related enzymes, forming a demethylation enzyme complex, in the endoplasmic reticulum. Interacts with ERG25 and ERG28. Also interacts with ERG7, but only in lipid particles.

The protein localises to the endoplasmic reticulum membrane. It is found in the lipid droplet. The enzyme catalyses 3-dehydro-4alpha-methylzymosterol + NADPH + H(+) = 4alpha-methylzymosterol + NADP(+). The protein operates within steroid biosynthesis; zymosterol biosynthesis; zymosterol from lanosterol: step 5/6. In terms of biological role, 3-keto-steroid reductase; part of the third module of ergosterol biosynthesis pathway that includes the late steps of the pathway. ERG27 is a catalytic component of the C-4 demethylation complex that catalyzes the reduction of the keto group on the C-3. The third module or late pathway involves the ergosterol synthesis itself through consecutive reactions that mainly occur in the endoplasmic reticulum (ER) membrane. Firstly, the squalene synthase ERG9 catalyzes the condensation of 2 farnesyl pyrophosphate moieties to form squalene, which is the precursor of all steroids. Squalene synthase is crucial for balancing the incorporation of farnesyl diphosphate (FPP) into sterol and nonsterol isoprene synthesis. Secondly, the squalene epoxidase ERG1 catalyzes the stereospecific oxidation of squalene to (S)-2,3-epoxysqualene, which is considered to be a rate-limiting enzyme in steroid biosynthesis. Then, the lanosterol synthase ERG7 catalyzes the cyclization of (S)-2,3 oxidosqualene to lanosterol, a reaction that forms the sterol core. In the next steps, lanosterol is transformed to zymosterol through a complex process involving various demethylation, reduction and desaturation reactions. The lanosterol 14-alpha-demethylase ERG11 (also known as CYP51) catalyzes C14-demethylation of lanosterol to produce 4,4'-dimethyl cholesta-8,14,24-triene-3-beta-ol, which is critical for ergosterol biosynthesis. The C-14 reductase ERG24 reduces the C14=C15 double bond of 4,4-dimethyl-cholesta-8,14,24-trienol to produce 4,4-dimethyl-cholesta-8,24-dienol. 4,4-dimethyl-cholesta-8,24-dienol is substrate of the C-4 demethylation complex ERG25-ERG26-ERG27 in which ERG25 catalyzes the three-step monooxygenation required for the demethylation of 4,4-dimethyl and 4alpha-methylsterols, ERG26 catalyzes the oxidative decarboxylation that results in a reduction of the 3-beta-hydroxy group at the C-3 carbon to an oxo group, and ERG27 is responsible for the reduction of the keto group on the C-3. ERG28 has a role as a scaffold to help anchor ERG25, ERG26 and ERG27 to the endoplasmic reticulum and ERG29 regulates the activity of the iron-containing C4-methylsterol oxidase ERG25. Then, the sterol 24-C-methyltransferase ERG6 catalyzes the methyl transfer from S-adenosyl-methionine to the C-24 of zymosterol to form fecosterol. The C-8 sterol isomerase ERG2 catalyzes the reaction which results in unsaturation at C-7 in the B ring of sterols and thus converts fecosterol to episterol. The sterol-C5-desaturase ERG3 then catalyzes the introduction of a C-5 double bond in the B ring to produce 5-dehydroepisterol. The C-22 sterol desaturase ERG5 further converts 5-dehydroepisterol into ergosta-5,7,22,24(28)-tetraen-3beta-ol by forming the C-22(23) double bond in the sterol side chain. Finally, ergosta-5,7,22,24(28)-tetraen-3beta-ol is substrate of the C-24(28) sterol reductase ERG4 to produce ergosterol. Facilitates the association of ERG7 with lipid particles preventing its digestion in the endoplasmic reticulum and the lipid particles. The chain is 3-keto-steroid reductase ERG27 from Candida albicans (strain SC5314 / ATCC MYA-2876) (Yeast).